The primary structure comprises 269 residues: Enoyl-[acyl-carrier-protein] reductase [NADH] (269 aa).

NAD(+) contacts are provided by residues 20 to 21 (SI), 64 to 65 (DV), and 95 to 96 (IG). Y158 contacts substrate. Residues K165 and I194 each coordinate NAD(+). T266 bears the Phosphothreonine mark.

Belongs to the short-chain dehydrogenases/reductases (SDR) family. FabI subfamily. In terms of assembly, homodimer. Homotetramer. In terms of processing, is phosphorylated in vivo. Phosphorylation on Thr-266 decreases enzymatic activity.

It localises to the secreted. It is found in the cell wall. The enzyme catalyses a 2,3-saturated acyl-[ACP] + NAD(+) = a (2E)-enoyl-[ACP] + NADH + H(+). It carries out the reaction a 2,3-saturated acyl-CoA + NAD(+) = a (2E)-enoyl-CoA + NADH + H(+). The catalysed reaction is (2E)-octenoyl-CoA + NADH + H(+) = octanoyl-CoA + NAD(+). It catalyses the reaction (2E)-dodecenoyl-CoA + NADH + H(+) = dodecanoyl-CoA + NAD(+). Its pathway is lipid metabolism; mycolic acid biosynthesis. InhA activity is controlled via phosphorylation: phosphorylation on Thr-266 decreases InhA activity and likely negatively regulates biosynthesis of mycolic acids and growth of the bacterium. InhA activity is likely inhibited by activated isoniazid, hexadecynoyl-CoA and octadecynoyl-CoA, which also block the biosynthesis of mycolic acids. The antitubercular pro-drug isoniazid (INH) is oxidatively activated by the catalase-peroxidase KatG and then covalently binds NAD to form an adduct that inhibits the activity of InhA. The inhibitory adduct is the isonicotinic-acyl-NADH where the isonicotinic-acyl group replaces the 4S (and not the 4R) hydrogen of NADH. Similarly, the antitubercular pro-drugs ethionamide (ETH) and prothionamide (PTH) are activated by the flavoprotein monooxygenase EthA, and forms an adduct with NAD (ETH-NAD and PTH-NAD, respectively) that is a tight-binding inhibitor of InhA. In terms of biological role, enoyl-ACP reductase of the type II fatty acid syntase (FAS-II) system, which is involved in the biosynthesis of mycolic acids, a major component of mycobacterial cell walls. Catalyzes the NADH-dependent reduction of the double bond of 2-trans-enoyl-[acyl-carrier protein], an essential step in the fatty acid elongation cycle of the FAS-II pathway. Shows preference for long-chain fatty acyl thioester substrates (&gt;C16), and can also use 2-trans-enoyl-CoAs as alternative substrates. The mycobacterial FAS-II system utilizes the products of the FAS-I system as primers to extend fatty acyl chain lengths up to C56, forming the meromycolate chain that serves as the precursor for final mycolic acids. Its function is as follows. Is the primary target of the first-line antitubercular drug isoniazid (INH) and of the second-line drug ethionamide (ETH). Overexpressed inhA confers INH and ETH resistance to M.smegmatis. The mechanism of isoniazid action against InhA is covalent attachment of the activated form of the drug to the nicotinamide ring of NAD and binding of the INH-NAD adduct to the active site of InhA. Similarly, the ETH-NAD adduct binds InhA. The sequence is that of Enoyl-[acyl-carrier-protein] reductase [NADH] from Mycolicibacterium smegmatis (strain ATCC 700084 / mc(2)155) (Mycobacterium smegmatis).